The sequence spans 229 residues: MIQTTFPDRAVMAELLAKMLWEIKAVHFNAAQPYKLSSGMASPVYIDCRKLLSFPRIRSTVMDFAASTLLRDAGFEQFDCIAGGETAGIPFAALLADRLSLPMIYVRKQPKGHGRNAQIEGNMPEGSRVLVIEDLTTAGGSMFKFIDAIRAAGGIVDHGIALFFYGIFGEERFADGKVRLHHIATWRNVLAVAKEQKLFDDKTLSEVEAFLDAPLAWSGRNGGVSELSL.

5-phospho-alpha-D-ribose 1-diphosphate contacts are provided by residues Arg107, Lys108, Lys111, His113, and 133-141; that span reads EDLTTAGGS. Position 137 (Thr137) interacts with orotate.

This sequence belongs to the purine/pyrimidine phosphoribosyltransferase family. PyrE subfamily. In terms of assembly, homodimer. The cofactor is Mg(2+).

The enzyme catalyses orotidine 5'-phosphate + diphosphate = orotate + 5-phospho-alpha-D-ribose 1-diphosphate. It participates in pyrimidine metabolism; UMP biosynthesis via de novo pathway; UMP from orotate: step 1/2. Catalyzes the transfer of a ribosyl phosphate group from 5-phosphoribose 1-diphosphate to orotate, leading to the formation of orotidine monophosphate (OMP). In Rhizobium johnstonii (strain DSM 114642 / LMG 32736 / 3841) (Rhizobium leguminosarum bv. viciae), this protein is Orotate phosphoribosyltransferase.